Consider the following 167-residue polypeptide: Large ribosomal subunit protein uL10 (167 aa).

Belongs to the universal ribosomal protein uL10 family. Part of the ribosomal stalk of the 50S ribosomal subunit. The N-terminus interacts with L11 and the large rRNA to form the base of the stalk. The C-terminus forms an elongated spine to which L12 dimers bind in a sequential fashion forming a multimeric L10(L12)X complex.

Forms part of the ribosomal stalk, playing a central role in the interaction of the ribosome with GTP-bound translation factors. The protein is Large ribosomal subunit protein uL10 of Yersinia enterocolitica serotype O:8 / biotype 1B (strain NCTC 13174 / 8081).